A 303-amino-acid polypeptide reads, in one-letter code: 2-phospho-L-lactate transferase (303 aa).

The 7,8-didemethyl-8-hydroxy-5-deazariboflavin site is built by Asp48 and Lys87.

This sequence belongs to the CofD family. As to quaternary structure, homodimer. It depends on Mg(2+) as a cofactor.

The catalysed reaction is (2S)-lactyl-2-diphospho-5'-guanosine + 7,8-didemethyl-8-hydroxy-5-deazariboflavin = oxidized coenzyme F420-0 + GMP + H(+). Its pathway is cofactor biosynthesis; coenzyme F420 biosynthesis. Catalyzes the transfer of the 2-phospholactate moiety from (2S)-lactyl-2-diphospho-5'-guanosine to 7,8-didemethyl-8-hydroxy-5-deazariboflavin (FO) with the formation of oxidized coenzyme F420-0 and GMP. The sequence is that of 2-phospho-L-lactate transferase from Methanosarcina mazei (strain ATCC BAA-159 / DSM 3647 / Goe1 / Go1 / JCM 11833 / OCM 88) (Methanosarcina frisia).